Here is a 528-residue protein sequence, read N- to C-terminus: Cytochrome b5 reductase 4 (528 aa).

Met-1 carries the post-translational modification N-acetylmethionine. A disordered region spans residues 1–29 (MLNVPSQAFPAPGSQQRVSSQGRSKVPLK). Low complexity predominate over residues 13–24 (GSQQRVSSQGRS). A Cytochrome b5 heme-binding domain is found at 54 to 130 (LIEVTEEELK…LKECLVGRMA (77 aa)). Heme is bound by residues His-89 and His-112. In terms of domain architecture, CS spans 172–263 (LSSPSYDWFQ…KESVSWQCLG (92 aa)). The 113-residue stretch at 280–392 (LYYRRCQLIS…SGPEGDFKVS (113 aa)) folds into the FAD-binding FR-type domain. FAD-binding positions include 372-387 (DRLQIGDFISVSGPEG) and 399-431 (DLFLLAAGTGFTPMVTVLNYALSHMSSLRKVKL).

Belongs to the flavoprotein pyridine nucleotide cytochrome reductase family. It depends on FAD as a cofactor. In terms of tissue distribution, ubiquitously expressed. Isoform 2 is expressed in testis, brain, skeletal muscle and in the male germline.

Its subcellular location is the endoplasmic reticulum. It carries out the reaction 2 Fe(III)-[cytochrome b5] + NADH = 2 Fe(II)-[cytochrome b5] + NAD(+) + H(+). NADH-cytochrome b5 reductase involved in endoplasmic reticulum stress response pathway. Plays a critical role in protecting pancreatic beta-cells against oxidant stress, possibly by protecting the cell from excess buildup of reactive oxygen species (ROS). This is Cytochrome b5 reductase 4 (Cyb5r4) from Mus musculus (Mouse).